The following is a 72-amino-acid chain: Translation initiation factor IF-1 (72 aa).

The S1-like domain maps to 1-72 (MAKDDVIEVE…NRGRITYRFK (72 aa)). Tyrosine 60 is modified (phosphotyrosine).

Belongs to the IF-1 family. In terms of assembly, component of the 30S ribosomal translation pre-initiation complex which assembles on the 30S ribosome in the order IF-2 and IF-3, IF-1 and N-formylmethionyl-tRNA(fMet); mRNA recruitment can occur at any time during PIC assembly.

It is found in the cytoplasm. One of the essential components for the initiation of protein synthesis. Stabilizes the binding of IF-2 and IF-3 on the 30S subunit to which N-formylmethionyl-tRNA(fMet) subsequently binds. Helps modulate mRNA selection, yielding the 30S pre-initiation complex (PIC). Upon addition of the 50S ribosomal subunit IF-1, IF-2 and IF-3 are released leaving the mature 70S translation initiation complex. This Bacillus thuringiensis (strain Al Hakam) protein is Translation initiation factor IF-1.